The sequence spans 180 residues: ATP-dependent protease subunit HslV (180 aa).

Residue T5 is part of the active site. Na(+)-binding residues include G161, C164, and T167.

The protein belongs to the peptidase T1B family. HslV subfamily. In terms of assembly, a double ring-shaped homohexamer of HslV is capped on each side by a ring-shaped HslU homohexamer. The assembly of the HslU/HslV complex is dependent on binding of ATP.

It localises to the cytoplasm. It catalyses the reaction ATP-dependent cleavage of peptide bonds with broad specificity.. Allosterically activated by HslU binding. In terms of biological role, protease subunit of a proteasome-like degradation complex believed to be a general protein degrading machinery. The sequence is that of ATP-dependent protease subunit HslV from Campylobacter jejuni subsp. doylei (strain ATCC BAA-1458 / RM4099 / 269.97).